The sequence spans 170 residues: Dual-action ribosomal maturation protein DarP (170 aa).

Belongs to the DarP family.

The protein localises to the cytoplasm. In terms of biological role, member of a network of 50S ribosomal subunit biogenesis factors which assembles along the 30S-50S interface, preventing incorrect 23S rRNA structures from forming. Promotes peptidyl transferase center (PTC) maturation. This chain is Dual-action ribosomal maturation protein DarP, found in Neisseria meningitidis serogroup A / serotype 4A (strain DSM 15465 / Z2491).